A 392-amino-acid chain; its full sequence is Enoyl-[acyl-carrier-protein] reductase [NADH] (392 aa).

Residues 48–53 (GCSTGY), 74–75 (FE), 111–112 (DA), and 139–140 (LA) contribute to the NAD(+) site. Tyrosine 225 serves as a coordination point for substrate. Tyrosine 235 (proton donor) is an active-site residue. NAD(+)-binding positions include lysine 244 and 273 to 275 (LVT).

It belongs to the TER reductase family. As to quaternary structure, monomer.

The catalysed reaction is a 2,3-saturated acyl-[ACP] + NAD(+) = a (2E)-enoyl-[ACP] + NADH + H(+). Its pathway is lipid metabolism; fatty acid biosynthesis. Its function is as follows. Involved in the final reduction of the elongation cycle of fatty acid synthesis (FAS II). Catalyzes the reduction of a carbon-carbon double bond in an enoyl moiety that is covalently linked to an acyl carrier protein (ACP). This Idiomarina loihiensis (strain ATCC BAA-735 / DSM 15497 / L2-TR) protein is Enoyl-[acyl-carrier-protein] reductase [NADH].